The primary structure comprises 410 residues: Interleukin-1 receptor type 2 (410 aa).

Positions 1–13 (MFILLVLVTGVSA) are cleaved as a signal peptide. Topologically, residues 14–355 (FTTPTVVHTG…SQSLHTTVKE (342 aa)) are extracellular. Ig-like C2-type domains are found at residues 35–136 (PTVH…VELK), 146–237 (PHVS…RNIE), and 249–357 (PVII…KEVS). 3 disulfide bridges follow: Cys-42/Cys-128, Cys-64/Cys-120, and Cys-164/Cys-219. Residues Asn-124, Asn-208, Asn-231, and Asn-289 are each glycosylated (N-linked (GlcNAc...) asparagine). Cys-270 and Cys-338 are oxidised to a cystine. A helical transmembrane segment spans residues 356 to 381 (VSSTFSWSIALAPLSLIILVVGAIWM). The Cytoplasmic portion of the chain corresponds to 382 to 410 (RRRCKRRAGKTYGLTKLRTDNQDFPSSPN).

This sequence belongs to the interleukin-1 receptor family. Associates with IL1RAP to form a non-signaling interleukin-1 receptor complex. Post-translationally, a soluble form (sIL1R2) can also be produced by proteolytic cleavage at the cell surface (shedding) involving a metalloproteinase. Strongly expressed in B-cells, with levels 21 times higher than IL1R1. In T-cells expressed 5 times more compared with IL1R1.

Its subcellular location is the membrane. The protein resides in the cell membrane. It is found in the secreted. Its function is as follows. Non-signaling receptor for IL1A, IL1B and IL1RN. Reduces IL1B activities. Serves as a decoy receptor by competitive binding to IL1B and preventing its binding to IL1R1. Also modulates cellular response through non-signaling association with IL1RAP after binding to IL1B. IL1R2 (membrane and secreted forms) preferentially binds IL1B and poorly IL1A and IL1RN. The secreted IL1R2 recruits secreted IL1RAP with high affinity; this complex formation may be the dominant mechanism for neutralization of IL1B by secreted/soluble receptors. This chain is Interleukin-1 receptor type 2 (Il1r2), found in Mus musculus (Mouse).